Consider the following 504-residue polypeptide: UDP-GalNAc:beta-1,3-N-acetylgalactosaminyltransferase 2 (504 aa).

Over 1-3 the chain is Cytoplasmic; sequence MRN. The chain crosses the membrane as a helical; Signal-anchor for type II membrane protein span at residues 4 to 24; sequence WLVLLCPCVLGAALHLWHLWL. At 25–504 the chain is on the lumenal side; that stretch reads RSPPDPHNTG…DPCQCEAKVR (480 aa). N-linked (GlcNAc...) asparagine glycans are attached at residues Asn-117 and Asn-176.

The protein belongs to the glycosyltransferase 31 family. In terms of processing, N-glycosylated. Present in testis (at protein level). In testis, it is mainly detected in the middle layers of seminiferous tubules at stages XII to II. Strongly expressed in primary and secondary spermatocytes and early round spermatids, but not in spermatogonia, elongating or elongated spermatids, or in Leydig or Sertoli cells.

It localises to the golgi apparatus membrane. The protein localises to the endoplasmic reticulum. It catalyses the reaction 3-O-(N-acetyl-beta-D-glucosaminyl-(1-&gt;4)-alpha-D-mannosyl)-L-threonyl-[protein] + UDP-N-acetyl-alpha-D-galactosamine = 3-O-[beta-D-GalNAc-(1-&gt;3)-beta-D-GlcNAc-(1-&gt;4)-alpha-D-Man]-L-Thr-[protein] + UDP + H(+). The protein operates within protein modification; protein glycosylation. Beta-1,3-N-acetylgalactosaminyltransferase that synthesizes a unique carbohydrate structure, GalNAc-beta-1-3GlcNAc, on N- and O-glycans. Has no galactose nor galactosaminyl transferase activity toward any acceptor substrate. Involved in alpha-dystroglycan (DAG1) glycosylation: acts coordinately with GTDC2/POMGnT2 to synthesize a GalNAc-beta3-GlcNAc-beta-terminus at the 4-position of protein O-mannose in the biosynthesis of the phosphorylated O-mannosyl trisaccharide (N-acetylgalactosamine-beta-3-N-acetylglucosamine-beta-4-(phosphate-6-)mannose), a carbohydrate structure present in alpha-dystroglycan, which is required for binding laminin G-like domain-containing extracellular proteins with high affinity. The protein is UDP-GalNAc:beta-1,3-N-acetylgalactosaminyltransferase 2 (B3galnt2) of Mus musculus (Mouse).